Here is a 118-residue protein sequence, read N- to C-terminus: Large ribosomal subunit protein bL20 (118 aa).

This sequence belongs to the bacterial ribosomal protein bL20 family.

Binds directly to 23S ribosomal RNA and is necessary for the in vitro assembly process of the 50S ribosomal subunit. It is not involved in the protein synthesizing functions of that subunit. This chain is Large ribosomal subunit protein bL20, found in Pseudomonas fluorescens (strain SBW25).